We begin with the raw amino-acid sequence, 481 residues long: Sucrose phosphorylase (481 aa).

Sucrose contacts are provided by residues Asp-49, His-87, 191-193 (RLD), Glu-234, 291-292 (HD), 335-338 (DIYQ), and Arg-392. Asp-193 acts as the Nucleophile in catalysis. The active-site Proton donor is Glu-234.

This sequence belongs to the glycosyl hydrolase 13 family. Sucrose phosphorylase subfamily.

It is found in the cytoplasm. The enzyme catalyses sucrose + phosphate = D-fructose + alpha-D-glucose 1-phosphate. In terms of biological role, intracellular catabolism of sucrose. Being intracellular, probably not involved in synthesis of extracellular polysaccharides. The polypeptide is Sucrose phosphorylase (Streptococcus mutans serotype c (strain ATCC 700610 / UA159)).